We begin with the raw amino-acid sequence, 305 residues long: Glycine--tRNA ligase alpha subunit (305 aa).

Belongs to the class-II aminoacyl-tRNA synthetase family. As to quaternary structure, tetramer of two alpha and two beta subunits.

The protein localises to the cytoplasm. The catalysed reaction is tRNA(Gly) + glycine + ATP = glycyl-tRNA(Gly) + AMP + diphosphate. The chain is Glycine--tRNA ligase alpha subunit (glyQ) from Vibrio cholerae serotype O1 (strain ATCC 39315 / El Tor Inaba N16961).